The primary structure comprises 470 residues: Glutathione reductase (470 aa).

Positions 16 and 17 each coordinate FAD. Position 16 (Ser16) interacts with glutathione. Arg23 provides a ligand contact to glutathione. Residues Glu36, Thr43, Cys44, and Lys52 each contribute to the FAD site. Residues Cys44 and Cys49 are joined by a disulfide bond. Tyr104 contributes to the glutathione binding site. Ala120 contributes to the FAD binding site. The NADP(+) site is built by Gly190, Ile193, Glu196, Arg213, and Arg219. A glutathione-binding site is contributed by Thr228. Position 280 (Gly280) interacts with NADP(+). Asp321 is an FAD binding site. Glu327 contributes to the NADP(+) binding site. Residue Thr329 participates in FAD binding. Arg337 lines the glutathione pocket. Ala362 lines the NADP(+) pocket. Lys412 lines the glutathione pocket. His459 contacts FAD. His459 (proton acceptor) is an active-site residue.

This sequence belongs to the class-I pyridine nucleotide-disulfide oxidoreductase family. As to quaternary structure, homodimer. FAD serves as cofactor.

The protein resides in the cytoplasm. The protein localises to the mitochondrion. It catalyses the reaction 2 glutathione + NADP(+) = glutathione disulfide + NADPH + H(+). Its function is as follows. Catalyzes the reduction of glutathione disulfide (GSSG) to reduced glutathione (GSH). Constitutes the major mechanism to maintain a high GSH:GSSG ratio in the cytosol. This chain is Glutathione reductase (GLR1), found in Yarrowia lipolytica (strain CLIB 122 / E 150) (Yeast).